We begin with the raw amino-acid sequence, 353 residues long: Photosystem II protein D1 (353 aa).

Residue Thr2 is modified to N-acetylthreonine. Thr2 is subject to Phosphothreonine. The next 3 membrane-spanning stretches (helical) occupy residues 29-46, 118-133, and 142-156; these read YIGWFGVLMIPTLLTATS, HFLLGVACYMGREWEL, and WIAVAYSAPVAAATA. A chlorophyll a-binding site is contributed by His118. Tyr126 contributes to the pheophytin a binding site. [CaMn4O5] cluster contacts are provided by Asp170 and Glu189. Residues 197–218 traverse the membrane as a helical segment; the sequence is FHMLGVAGVFGGSLFSAMHGSL. Position 198 (His198) interacts with chlorophyll a. Residues His215 and 264 to 265 each bind a quinone; that span reads SF. His215 lines the Fe cation pocket. His272 serves as a coordination point for Fe cation. The chain crosses the membrane as a helical span at residues 274-288; the sequence is FLAAWPVVGIWFTAL. Residues His332, Glu333, Asp342, and Ala344 each contribute to the [CaMn4O5] cluster site. A propeptide spanning residues 345-353 is cleaved from the precursor; sequence AVEAPSTNG.

It belongs to the reaction center PufL/M/PsbA/D family. In terms of assembly, PSII is composed of 1 copy each of membrane proteins PsbA, PsbB, PsbC, PsbD, PsbE, PsbF, PsbH, PsbI, PsbJ, PsbK, PsbL, PsbM, PsbT, PsbX, PsbY, PsbZ, Psb30/Ycf12, at least 3 peripheral proteins of the oxygen-evolving complex and a large number of cofactors. It forms dimeric complexes. It depends on The D1/D2 heterodimer binds P680, chlorophylls that are the primary electron donor of PSII, and subsequent electron acceptors. It shares a non-heme iron and each subunit binds pheophytin, quinone, additional chlorophylls, carotenoids and lipids. D1 provides most of the ligands for the Mn4-Ca-O5 cluster of the oxygen-evolving complex (OEC). There is also a Cl(-1) ion associated with D1 and D2, which is required for oxygen evolution. The PSII complex binds additional chlorophylls, carotenoids and specific lipids. as a cofactor. In terms of processing, tyr-161 forms a radical intermediate that is referred to as redox-active TyrZ, YZ or Y-Z. Post-translationally, C-terminally processed by CTPA; processing is essential to allow assembly of the oxygen-evolving complex and thus photosynthetic growth.

It localises to the plastid. The protein localises to the chloroplast thylakoid membrane. The enzyme catalyses 2 a plastoquinone + 4 hnu + 2 H2O = 2 a plastoquinol + O2. In terms of biological role, photosystem II (PSII) is a light-driven water:plastoquinone oxidoreductase that uses light energy to abstract electrons from H(2)O, generating O(2) and a proton gradient subsequently used for ATP formation. It consists of a core antenna complex that captures photons, and an electron transfer chain that converts photonic excitation into a charge separation. The D1/D2 (PsbA/PsbD) reaction center heterodimer binds P680, the primary electron donor of PSII as well as several subsequent electron acceptors. The chain is Photosystem II protein D1 from Oenothera parviflora (Small-flowered evening primrose).